The primary structure comprises 138 residues: Large ribosomal subunit protein uL16 (138 aa).

Basic residues predominate over residues 1–13 (MLQPARRKFRKEQ). Residues 1–22 (MLQPARRKFRKEQKGRNTGLAT) form a disordered region.

It belongs to the universal ribosomal protein uL16 family. Part of the 50S ribosomal subunit.

Functionally, binds 23S rRNA and is also seen to make contacts with the A and possibly P site tRNAs. The chain is Large ribosomal subunit protein uL16 from Thiobacillus denitrificans (strain ATCC 25259 / T1).